Here is a 214-residue protein sequence, read N- to C-terminus: Adenylate kinase (214 aa).

10–15 (GAGKGT) lines the ATP pocket. The interval 30 to 59 (STGDMLRAAVKAGSELGLKAKEIMDAGKLV) is NMP. AMP contacts are provided by residues Thr31, Arg36, 57–59 (KLV), 85–88 (GFPR), and Gln92. Residues 122-159 (GRRVHAASGRVYHVKFNPPKVEDKDDVTGEDLTIRKDD) form an LID region. Residues Arg123 and 132–133 (VY) each bind ATP. AMP-binding residues include Arg156 and Arg167. ATP is bound at residue Arg200.

This sequence belongs to the adenylate kinase family. Monomer.

Its subcellular location is the cytoplasm. The enzyme catalyses AMP + ATP = 2 ADP. It functions in the pathway purine metabolism; AMP biosynthesis via salvage pathway; AMP from ADP: step 1/1. Its function is as follows. Catalyzes the reversible transfer of the terminal phosphate group between ATP and AMP. Plays an important role in cellular energy homeostasis and in adenine nucleotide metabolism. In Yersinia enterocolitica serotype O:8 / biotype 1B (strain NCTC 13174 / 8081), this protein is Adenylate kinase.